The following is a 280-amino-acid chain: Hemin import ATP-binding protein HmuV (280 aa).

The region spanning Leu-26–Pro-260 is the ABC transporter domain. Gly-59 to Ser-66 provides a ligand contact to ATP.

This sequence belongs to the ABC transporter superfamily. Heme (hemin) importer (TC 3.A.1.14.5) family. The complex is composed of two ATP-binding proteins (HmuV), two transmembrane proteins (HmuU) and a solute-binding protein (HmuT).

It localises to the cell membrane. Its function is as follows. Part of the ABC transporter complex HmuTUV involved in hemin import. Responsible for energy coupling to the transport system. This is Hemin import ATP-binding protein HmuV from Streptomyces coelicolor (strain ATCC BAA-471 / A3(2) / M145).